The following is an 863-amino-acid chain: Penicillin-binding protein 1A (863 aa).

Residues 1-28 are Cytoplasmic-facing; sequence MTENRDNKTSQSEKTTQKKKKKKFKAFK. A helical; Signal-anchor for type II membrane protein transmembrane segment spans residues 29–49; the sequence is IILITFITLIVISLVTAIGIT. Residues 50–863 are Extracellular-facing; sequence LAIIKTSPDI…KPIIRPKKHF (814 aa). The tract at residues 71 to 248 is transglycosylase; the sequence is SKIYDDKGEL…PSVYYPYSRT (178 aa). The active-site Proton donor; for transglycosylase activity is Glu-110. Residues 392-674 form a transpeptidase region; sequence ASAVLTDYHT…AAALFGKIMN (283 aa). Ser-431 serves as the catalytic Acyl-ester intermediate; for transpeptidase activity. The tract at residues 774 to 863 is disordered; sequence DDDMYVLPDK…KPIIRPKKHF (90 aa). Positions 808–836 are enriched in polar residues; that stretch reads EDATNEASTEPSPNTDTVPEDSTNNLDPT. Residues 837–846 show a composition bias toward basic and acidic residues; the sequence is KNTEKKPSDK. Over residues 847-863 the composition is skewed to basic residues; it reads KNKKHVIKPIIRPKKHF.

It in the N-terminal section; belongs to the glycosyltransferase 51 family. The protein in the C-terminal section; belongs to the transpeptidase family.

The protein resides in the cell membrane. The enzyme catalyses [GlcNAc-(1-&gt;4)-Mur2Ac(oyl-L-Ala-gamma-D-Glu-L-Lys-D-Ala-D-Ala)](n)-di-trans,octa-cis-undecaprenyl diphosphate + beta-D-GlcNAc-(1-&gt;4)-Mur2Ac(oyl-L-Ala-gamma-D-Glu-L-Lys-D-Ala-D-Ala)-di-trans,octa-cis-undecaprenyl diphosphate = [GlcNAc-(1-&gt;4)-Mur2Ac(oyl-L-Ala-gamma-D-Glu-L-Lys-D-Ala-D-Ala)](n+1)-di-trans,octa-cis-undecaprenyl diphosphate + di-trans,octa-cis-undecaprenyl diphosphate + H(+). The catalysed reaction is Preferential cleavage: (Ac)2-L-Lys-D-Ala-|-D-Ala. Also transpeptidation of peptidyl-alanyl moieties that are N-acyl substituents of D-alanine.. It functions in the pathway cell wall biogenesis; peptidoglycan biosynthesis. In terms of biological role, cell wall formation. Synthesis of cross-linked peptidoglycan from the lipid intermediates. The enzyme has a penicillin-insensitive transglycosylase N-terminal domain (formation of linear glycan strands) and a penicillin-sensitive transpeptidase C-terminal domain (cross-linking of the peptide subunits). In Clostridium novyi (strain NT), this protein is Penicillin-binding protein 1A (pbpA).